Here is a 384-residue protein sequence, read N- to C-terminus: Substance-K receptor (384 aa).

Over 1–32 the chain is Extracellular; the sequence is MGACVVMTDINISSGLDSNATGITAFSMPGWQ. 2 N-linked (GlcNAc...) asparagine glycosylation sites follow: N11 and N19. Residues 33 to 56 traverse the membrane as a helical segment; it reads LALWTAAYLALVLVAVMGNATVIW. The Cytoplasmic segment spans residues 57–69; sequence IILAHQRMRTVTN. A helical transmembrane segment spans residues 70 to 90; that stretch reads YFIVNLALADLCMAAFNAAFN. Residues 91-107 are Extracellular-facing; sequence FVYASHNIWYFGRAFCY. C106 and C181 are oxidised to a cystine. Residues 108 to 129 traverse the membrane as a helical segment; that stretch reads FQNLFPITAMFVSIYSMTAIAA. At 130 to 149 the chain is on the cytoplasmic side; the sequence is DRYMAIVHPFQPRLSAPGTR. A helical transmembrane segment spans residues 150 to 170; that stretch reads AVIAGIWLVALALAFPQCFYS. Topologically, residues 171–196 are extracellular; that stretch reads TITTDEGATKCVVAWPEDSGGKMLLL. The chain crosses the membrane as a helical span at residues 197-218; that stretch reads YHLIVIALIYFLPLVVMFVAYS. The Cytoplasmic segment spans residues 219–251; sequence VIGLTLWRRSVPGHQAHGANLRHLQAKKKFVKT. A helical transmembrane segment spans residues 252–272; that stretch reads MVLVVVTFAICWLPYHLYFIL. Over 273–290 the chain is Extracellular; the sequence is GTFQEDIYCHKFIQQVYL. Residues 291 to 310 form a helical membrane-spanning segment; that stretch reads ALFWLAMSSTMYNPIIYCCL. The Cytoplasmic portion of the chain corresponds to 311–384; it reads NHRFRSGFRL…SPQAGVSTEP (74 aa). A lipid anchor (S-palmitoyl cysteine) is attached at C324.

It belongs to the G-protein coupled receptor 1 family.

It is found in the cell membrane. This is a receptor for the tachykinin neuropeptide substance K (neurokinin A). It is associated with G proteins that activate a phosphatidylinositol-calcium second messenger system. The rank order of affinity of this receptor to tachykinins is: substance K &gt; neuromedin-K &gt; substance P. The sequence is that of Substance-K receptor (TACR2) from Bos taurus (Bovine).